A 422-amino-acid chain; its full sequence is 26S proteasome non-ATPase regulatory subunit 11 (422 aa).

Ala2 is subject to N-acetylalanine. Ser14 and Ser23 each carry phosphoserine. In terms of domain architecture, PCI spans 224-392 (DWKTAYSYFY…GVLIIFDEPP (169 aa)). Lys274 is covalently cross-linked (Glycyl lysine isopeptide (Lys-Gly) (interchain with G-Cter in SUMO2)).

This sequence belongs to the proteasome subunit S9 family. Component of the 19S proteasome regulatory particle complex. The 26S proteasome consists of a 20S core particle (CP) and two 19S regulatory subunits (RP). The regulatory particle is made of a lid composed of 9 subunits including PSMD11, a base containing 6 ATPases and few additional components.

Its function is as follows. Component of the 26S proteasome, a multiprotein complex involved in the ATP-dependent degradation of ubiquitinated proteins. This complex plays a key role in the maintenance of protein homeostasis by removing misfolded or damaged proteins, which could impair cellular functions, and by removing proteins whose functions are no longer required. Therefore, the proteasome participates in numerous cellular processes, including cell cycle progression, apoptosis, or DNA damage repair. In the complex, PSMD11 is required for proteasome assembly. Plays a key role in increased proteasome activity in embryonic stem cells (ESCs): its high expression in ESCs promotes enhanced assembly of the 26S proteasome, followed by higher proteasome activity. This is 26S proteasome non-ATPase regulatory subunit 11 (Psmd11) from Mus musculus (Mouse).